The following is a 244-amino-acid chain: Tetraspanin-7 (244 aa).

The Cytoplasmic portion of the chain corresponds to 1 to 11 (METKPVITCLK). A helical transmembrane segment spans residues 12–35 (TLLIIYSFVFWITGVILLAVGVWG). Topologically, residues 36–51 (KLTLGTYISLIAENST) are extracellular. N49 is a glycosylation site (N-linked (GlcNAc...) asparagine). Residues 52–70 (NAPYVLIGTGTTIVVFGLF) form a helical membrane-spanning segment. Over 71-81 (GCFATCRGSPW) the chain is Cytoplasmic. A helical transmembrane segment spans residues 82 to 107 (MLKLYAMFLSLVFLAELVAGISGFVF). The Extracellular segment spans residues 108–208 (RHEIKDTFLR…LVTSFMETNM (101 aa)). N-linked (GlcNAc...) asparagine glycans are attached at residues N150, N153, N172, and N183. A helical membrane pass occupies residues 209–229 (GIIAGVAFGIAFSQLIGMLLA). Residues 230–244 (CCLSRFITANQYEMV) lie on the Cytoplasmic side of the membrane.

The protein belongs to the tetraspanin (TM4SF) family.

It localises to the membrane. May be involved in cell proliferation and cell motility. This is Tetraspanin-7 (TSPAN7) from Pongo pygmaeus (Bornean orangutan).